The following is a 292-amino-acid chain: tRNA-cytidine(32) 2-sulfurtransferase (292 aa).

The short motif at 62 to 67 is the PP-loop motif element; the sequence is SGGKDS. [4Fe-4S] cluster is bound by residues Cys137, Cys140, and Cys228.

The protein belongs to the TtcA family. Homodimer. Requires Mg(2+) as cofactor. [4Fe-4S] cluster is required as a cofactor.

The protein localises to the cytoplasm. It catalyses the reaction cytidine(32) in tRNA + S-sulfanyl-L-cysteinyl-[cysteine desulfurase] + AH2 + ATP = 2-thiocytidine(32) in tRNA + L-cysteinyl-[cysteine desulfurase] + A + AMP + diphosphate + H(+). Its pathway is tRNA modification. Functionally, catalyzes the ATP-dependent 2-thiolation of cytidine in position 32 of tRNA, to form 2-thiocytidine (s(2)C32). The sulfur atoms are provided by the cysteine/cysteine desulfurase (IscS) system. This is tRNA-cytidine(32) 2-sulfurtransferase from Brucella anthropi (strain ATCC 49188 / DSM 6882 / CCUG 24695 / JCM 21032 / LMG 3331 / NBRC 15819 / NCTC 12168 / Alc 37) (Ochrobactrum anthropi).